A 176-amino-acid chain; its full sequence is uncharacterized protein (176 aa).

This is an uncharacterized protein from Methanocaldococcus jannaschii (strain ATCC 43067 / DSM 2661 / JAL-1 / JCM 10045 / NBRC 100440) (Methanococcus jannaschii).